Consider the following 503-residue polypeptide: Probable cytosol aminopeptidase (503 aa).

Mn(2+) is bound by residues lysine 270 and aspartate 275. Lysine 282 is a catalytic residue. Residues aspartate 293, aspartate 352, and glutamate 354 each contribute to the Mn(2+) site. Arginine 356 is an active-site residue.

This sequence belongs to the peptidase M17 family. It depends on Mn(2+) as a cofactor.

The protein localises to the cytoplasm. It carries out the reaction Release of an N-terminal amino acid, Xaa-|-Yaa-, in which Xaa is preferably Leu, but may be other amino acids including Pro although not Arg or Lys, and Yaa may be Pro. Amino acid amides and methyl esters are also readily hydrolyzed, but rates on arylamides are exceedingly low.. The catalysed reaction is Release of an N-terminal amino acid, preferentially leucine, but not glutamic or aspartic acids.. Functionally, presumably involved in the processing and regular turnover of intracellular proteins. Catalyzes the removal of unsubstituted N-terminal amino acids from various peptides. This Yersinia enterocolitica serotype O:8 / biotype 1B (strain NCTC 13174 / 8081) protein is Probable cytosol aminopeptidase.